A 224-amino-acid chain; its full sequence is COMM domain-containing protein 5 (224 aa).

Residue Ser-2 is modified to N-acetylserine. Positions 151–215 (HIADFRWRVD…LVLKEMADLE (65 aa)) constitute a COMM domain.

This sequence belongs to the COMM domain-containing protein 5 family. As to quaternary structure, component of the commander complex consisting of the CCC subcomplex and the retriever subcomplex. Component of the CCC (COMMD/CCDC22/CCDC93) subcomplex consisting of COMMD1, COMMD2, COMMD3, COMMD4, COMMD5, COMMD6, COMMD7, COMMD8, COMMD9, COMMD10, CCDC22 and CCDC93; within the complex forms a heterodimer with COMMD10. Interacts (via COMM domain) with COMMD1 (via COMM domain). Interacts with RELA, RELB, NFKB1/p105. Interacts with CCDC22, CCDC93, SCNN1B, CUL2, CUL3, CUL4A, CUL4B, CUL7.

Its subcellular location is the nucleus. It is found in the cytoplasm. Its function is as follows. Scaffold protein in the commander complex that is essential for endosomal recycling of transmembrane cargos; the commander complex is composed of the CCC subcomplex and the retriever subcomplex. May modulate activity of cullin-RING E3 ubiquitin ligase (CRL) complexes. Negatively regulates cell proliferation. Negatively regulates cell cycle G2/M phase transition probably by transactivating p21/CDKN1A through the p53/TP53-independent signaling pathway. Involved in kidney proximal tubule morphogenesis. Down-regulates activation of NF-kappa-B. This chain is COMM domain-containing protein 5 (COMMD5), found in Bos taurus (Bovine).